The chain runs to 41 residues: uncharacterized protein (41 aa).

The tract at residues 19–41 (NSTRNSSSSSRSSYSSRTTVFSL) is disordered.

This is an uncharacterized protein from Dictyostelium discoideum (Social amoeba).